Reading from the N-terminus, the 181-residue chain is Oligoribonuclease (181 aa).

One can recognise an Exonuclease domain in the interval 8–171; the sequence is LIWIDLEMTG…DDIRESVAEL (164 aa). Residue Tyr129 is part of the active site.

Belongs to the oligoribonuclease family.

Its subcellular location is the cytoplasm. Functionally, 3'-to-5' exoribonuclease specific for small oligoribonucleotides. The chain is Oligoribonuclease from Klebsiella pneumoniae subsp. pneumoniae (strain ATCC 700721 / MGH 78578).